The following is a 244-amino-acid chain: Globin-like protein 9 (244 aa).

Positions Met-1–Arg-38 are disordered. The region spanning Ser-47 to Glu-200 is the Globin domain. The heme site is built by His-111 and His-143.

This sequence belongs to the globin family.

The protein is Globin-like protein 9 of Caenorhabditis briggsae.